Reading from the N-terminus, the 229-residue chain is Cytochrome b6-f complex iron-sulfur subunit, chloroplastic (229 aa).

The transit peptide at 1–50 (MASSSLSPATQLGSSRSALMAMSSGLFVKPTKMNHQMVRKEKIGLRISCQ) directs the protein to the chloroplast. A helical membrane pass occupies residues 68–90 (LNLLLLGALSLPTGYMLVPYATF). Residues 115-211 (AAEWLKTHGP…ADIDEAGKVL (97 aa)) enclose the Rieske domain. 4 residues coordinate [2Fe-2S] cluster: C157, H159, C175, and H178. A disulfide bridge connects residues C162 and C177. At S196 the chain carries Phosphoserine.

The protein belongs to the Rieske iron-sulfur protein family. As to quaternary structure, the 4 large subunits of the cytochrome b6-f complex are cytochrome b6, subunit IV (17 kDa polypeptide, petD), cytochrome f and the Rieske protein, while the 4 small subunits are petG, petL, petM and petN. The complex functions as a dimer. Interacts with PGRL1A. Component of a mitochondrial large protein complex that contains, at least, MIC60, DGS1, TOM40, TOM20 proteins, and petC/RISP. [2Fe-2S] cluster is required as a cofactor. In terms of tissue distribution, confined to photosynthetic tissues, with highest levels in flowers. In leaves, mostly localized in mesophyll cells. In stems, confined to the peripheral ring of chlorenchyma and adjoining groups of cells associated with the vascular bundles. In siliques, present in green wall of the fruit and in peduncle but not in the translucide white septum of the seeds.

The protein localises to the plastid. Its subcellular location is the chloroplast thylakoid membrane. It localises to the mitochondrion inner membrane. The catalysed reaction is 2 oxidized [plastocyanin] + a plastoquinol + 2 H(+)(in) = 2 reduced [plastocyanin] + a plastoquinone + 4 H(+)(out). Essential protein for photoautotrophism. Confers resistance to photo-oxidative damages by contributing to the thermal dissipation of light energy and to lumenal acidification (increase of pH gradient). Component of the cytochrome b6-f complex, which mediates electron transfer between photosystem II (PSII) and photosystem I (PSI), cyclic electron flow around PSI, and state transitions. The polypeptide is Cytochrome b6-f complex iron-sulfur subunit, chloroplastic (Arabidopsis thaliana (Mouse-ear cress)).